A 246-amino-acid polypeptide reads, in one-letter code: Glandular kallikrein (246 aa).

Residues 1–7 constitute a propeptide that is removed on maturation; the sequence is APPIQSR. The Peptidase S1 domain occupies 8 to 243; sequence IIGGRECEKN…YLDWINDTIT (236 aa). Intrachain disulfides connect Cys-14/Cys-158, Cys-33/Cys-49, Cys-135/Cys-204, Cys-169/Cys-183, and Cys-194/Cys-219. Catalysis depends on His-48, which acts as the Charge relay system. Asn-85 carries N-linked (GlcNAc...) asparagine glycosylation. The kallikrein (autolysis) loop stretch occupies residues 85 to 104; that stretch reads NLSLLKXHTKADGKDYSHDL. The Charge relay system role is filled by Asp-103. Catalysis depends on Ser-198, which acts as the Charge relay system. Residue Asn-239 is glycosylated (N-linked (GlcNAc...) asparagine).

Belongs to the peptidase S1 family. Kallikrein subfamily. In terms of assembly, monomer.

The catalysed reaction is Preferential cleavage of Arg-|-Xaa bonds in small molecule substrates. Highly selective action to release kallidin (lysyl-bradykinin) from kininogen involves hydrolysis of Met-|-Xaa or Leu-|-Xaa.. Functionally, glandular kallikreins cleave Met-Lys and Arg-Ser bonds in kininogen to release Lys-bradykinin. The polypeptide is Glandular kallikrein (Sus scrofa (Pig)).